The chain runs to 307 residues: N-myc-interactor (307 aa).

Residues 1-24 are disordered; the sequence is MEADKDDTQQILKEHSPDEFIKDE. Ser-16 carries the post-translational modification Phosphoserine. Residue Lys-22 forms a Glycyl lysine isopeptide (Lys-Gly) (interchain with G-Cter in ubiquitin) linkage. Residues 30-64 are a coiled coil; sequence IDEITKKNIQLKKEIQKLETELQEATKEFQIKEDI. 2 NID domains span residues 103–192 and 201–292; these read GQAL…GEVD and GSAV…EVDV.

Belongs to the NMI family. Interacts with MYCN and MYC, as well as with other transcription factors with a Zip, HLH or a HLH-Zip motif. Interacts with all STAT proteins except STAT2. Interacts with IRF7, the interaction is direct and leads to the inhibition of IRF7-mediated type I IFN production. Interacts (via coiled-coil domain) with TRIM21 (via the SPRY domain); the interaction leads to 'Lys-63'-linked ubiquitination of NMI. Interacts with IFI35; the interaction is direct and is facilitated by TRIM21. Interacts with TLR4; the interaction is direct and leads to NF-kappa-B activation. As to quaternary structure, (Microbial infection) Interacts with human cytomegalovirus protein UL23; this interaction inhibits NMI-mediated transcription of interferon-gamma stimulated genes. Post-translationally, ubiquitinated. 'Lys-63'-linked ubiquitination by TRIM21 promotes interaction with IFI35 and inhibits virus-triggered type I IFN-beta production. In terms of tissue distribution, expressed in adult spleen, liver, and kidney. Expressed in fetal thymus, liver, placenta, spleen, lung, and kidney but not brain. Expressed in macrophages.

It is found in the cytoplasm. The protein resides in the nucleus. Its subcellular location is the secreted. Acts as a signaling pathway regulator involved in innate immune system response. In response to interleukin 2/IL2 and interferon IFN-gamma/IFNG, interacts with signal transducer and activator of transcription/STAT which activate the transcription of downstream genes involved in a multitude of signals for development and homeostasis. Enhances the recruitment of CBP/p300 coactivators to STAT1 and STAT5, resulting in increased STAT1- and STAT5-dependent transcription. In response to interferon IFN-alpha, associates in a complex with signaling pathway regulator IFI35 to regulate immune response; the complex formation prevents proteasome-mediated degradation of IFI35. In complex with IFI35, inhibits virus-triggered type I IFN-beta production when ubiquitinated by ubiquitin-protein ligase TRIM21. In complex with IFI35, negatively regulates nuclear factor NF-kappa-B signaling by inhibiting the nuclear translocation, activation and transcription of NF-kappa-B subunit p65/RELA, resulting in the inhibition of endothelial cell proliferation, migration and re-endothelialization of injured arteries. Negatively regulates virus-triggered type I interferon/IFN production by inducing proteosome-dependent degradation of IRF7, a transcriptional regulator of type I IFN, thereby interfering with cellular antiviral responses. Beside its role as an intracellular signaling pathway regulator, also functions extracellularly as damage-associated molecular patterns (DAMPs) to promote inflammation, when actively released by macrophage to the extracellular space during cell injury or pathogen invasion. Macrophage-secreted NMI activates NF-kappa-B signaling in adjacent macrophages through Toll-like receptor 4/TLR4 binding and activation, thereby inducing NF-kappa-B translocation from the cytoplasm into the nucleus which promotes the release of pro-inflammatory cytokines. This chain is N-myc-interactor, found in Homo sapiens (Human).